The sequence spans 399 residues: Elongation factor Tu (399 aa).

Residues 10–204 (KPHVNIGTIG…AVDASIPEPE (195 aa)) form the tr-type G domain. The segment at 19–26 (GHVDHGKT) is G1. 19-26 (GHVDHGKT) provides a ligand contact to GTP. Threonine 26 lines the Mg(2+) pocket. Positions 60 to 64 (GITIN) are G2. Residues 81-84 (DCPG) are G3. Residues 81-85 (DCPGH) and 136-139 (NKCD) each bind GTP. The tract at residues 136–139 (NKCD) is G4. The interval 174-176 (SGL) is G5.

It belongs to the TRAFAC class translation factor GTPase superfamily. Classic translation factor GTPase family. EF-Tu/EF-1A subfamily. Monomer.

It localises to the cytoplasm. It catalyses the reaction GTP + H2O = GDP + phosphate + H(+). GTP hydrolase that promotes the GTP-dependent binding of aminoacyl-tRNA to the A-site of ribosomes during protein biosynthesis. The chain is Elongation factor Tu from Prochlorococcus marinus (strain AS9601).